The primary structure comprises 367 residues: GDSL esterase/lipase 3 (367 aa).

A signal peptide spans M1–C23. S42 (nucleophile) is an active-site residue. N-linked (GlcNAc...) asparagine glycosylation is found at N175, N194, and N321. Active-site residues include D329 and H332. N351 carries an N-linked (GlcNAc...) asparagine glycan.

The protein belongs to the 'GDSL' lipolytic enzyme family.

Its subcellular location is the secreted. The polypeptide is GDSL esterase/lipase 3 (GLIP3) (Arabidopsis thaliana (Mouse-ear cress)).